Here is a 138-residue protein sequence, read N- to C-terminus: Large ribosomal subunit protein uL16 (138 aa).

Over residues 1-16 the composition is skewed to basic residues; it reads MLIPRKVAHRKQHHPG. The disordered stretch occupies residues 1–24; sequence MLIPRKVAHRKQHHPGRTGAAKGG.

Belongs to the universal ribosomal protein uL16 family. In terms of assembly, part of the 50S ribosomal subunit.

Its function is as follows. Binds 23S rRNA and is also seen to make contacts with the A and possibly P site tRNAs. The polypeptide is Large ribosomal subunit protein uL16 (Frankia alni (strain DSM 45986 / CECT 9034 / ACN14a)).